We begin with the raw amino-acid sequence, 280 residues long: Proteasome subunit beta 2 (280 aa).

Residues M1–G52 constitute a propeptide, removed in mature form; by autocatalysis. Residue T53 is the Nucleophile of the active site.

This sequence belongs to the peptidase T1B family. As to quaternary structure, the 20S proteasome core is composed of 14 alpha and 14 beta subunits that assemble into four stacked heptameric rings, resulting in a barrel-shaped structure. The two inner rings, each composed of seven catalytic beta subunits, are sandwiched by two outer rings, each composed of seven alpha subunits. The catalytic chamber with the active sites is on the inside of the barrel. Has a gated structure, the ends of the cylinder being occluded by the N-termini of the alpha-subunits. Is capped by the proteasome-associated ATPase, ARC.

The protein resides in the cytoplasm. The enzyme catalyses Cleavage of peptide bonds with very broad specificity.. Its pathway is protein degradation; proteasomal Pup-dependent pathway. The formation of the proteasomal ATPase ARC-20S proteasome complex, likely via the docking of the C-termini of ARC into the intersubunit pockets in the alpha-rings, may trigger opening of the gate for substrate entry. Interconversion between the open-gate and close-gate conformations leads to a dynamic regulation of the 20S proteasome proteolysis activity. Functionally, component of the proteasome core, a large protease complex with broad specificity involved in protein degradation. This chain is Proteasome subunit beta 2, found in Thermomonospora curvata (strain ATCC 19995 / DSM 43183 / JCM 3096 / KCTC 9072 / NBRC 15933 / NCIMB 10081 / Henssen B9).